A 194-amino-acid polypeptide reads, in one-letter code: Xanthine phosphoribosyltransferase (194 aa).

Residues Leu-20 and Asn-27 each coordinate xanthine. 128–132 (ANGQA) is a binding site for 5-phospho-alpha-D-ribose 1-diphosphate. Lys-156 contacts xanthine.

The protein belongs to the purine/pyrimidine phosphoribosyltransferase family. Xpt subfamily. In terms of assembly, homodimer.

Its subcellular location is the cytoplasm. The catalysed reaction is XMP + diphosphate = xanthine + 5-phospho-alpha-D-ribose 1-diphosphate. Its pathway is purine metabolism; XMP biosynthesis via salvage pathway; XMP from xanthine: step 1/1. Converts the preformed base xanthine, a product of nucleic acid breakdown, to xanthosine 5'-monophosphate (XMP), so it can be reused for RNA or DNA synthesis. The sequence is that of Xanthine phosphoribosyltransferase from Oceanobacillus iheyensis (strain DSM 14371 / CIP 107618 / JCM 11309 / KCTC 3954 / HTE831).